The sequence spans 982 residues: MASFFSDFGLMWYLEELNKKEFMKFKEFLKQEILQLRLKQISWTEVKKASREDLANLLLKHYEEKKAWDMTFKIFQKMNRKDLMERAGREIAGHSKLYQAHLKKKLTHDYARKFNIKVQDFSKQKFTQDDYDRFENFLISKVTAKKPHMVFLQGAAGIGKSLMLTKLMLAWSEGMVFQNKFSYIFYFCCQDVKKMKRASLAELISKEWPKTSAPIEDILSQPEKLLFVIDNLEVMECDMSERESELCDTCTEKQPVRILLSSLLRRKMLPKSSFLISATPETFEKMEGRVECTNVKIVTGFNESNIKMYFRSLFQDKTKTQEIFSLVKENQQLFTVCQVPVLCWMVATCLKKEIEKGRDLVSVCRRTTSLYTTHIFNLFIPQSAQYPSKESQAQLQSLCSLAAEGMWTDTFVFGEEALRRNGIMDSDIPTLLDVRILEKSKKSEKSYIFLHPSIQEVCAAIFYLLKSHMDHPSQDVKSIEALIFTFLKKVKVQWIFFGSFIFGLLHESEQKKLEAFFGHQLSQEIKRQLYQCLETISGNEELQEQVDGMKLFYCLFEMDDEAFLAQAMNCMEQINFVAKDYSDVIVAAHCLQHCSTLKKLSLSTQNVLSEGQEHSYTEKLLMCWHHMCSVLISSKDIYILQVKNTNLNETASLVLYSHLMYPSCTLKALVVNNVTFLCDNRLFFELIQNQCLQHLDLNLTFLSHGDVKLLCDVLSQEECNIEKLMVAACNLSPDDCKVFASVLISSKMLKHLNLSSNNLDKGISSLSKALCHPDCVLKNLVLVNCSLSEQCWDYLSEVLRRNKTLNHLDISSNDLKDEGLKVLCGALSLPDSVLKSLSVRYCLITTSGCQDLAEVLRKNQNLRNLQVSNNKIEDAGVKLLCDAIKHPNCHLENIGLEACALTGACCEDLASAFTHCKTLWGINLQENALDHSGLIVLFEALKQQQCTLHVLGLRITDFDKETQELLMAEEEKNPHLSILSSV.

The region spanning 1-93 (MASFFSDFGL…MERAGREIAG (93 aa)) is the Pyrin domain. The NACHT domain occupies 148-471 (HMVFLQGAAG…FYLLKSHMDH (324 aa)). 154 to 161 (GAAGIGKS) serves as a coordination point for ATP. LRR repeat units follow at residues 594–617 (CSTL…HSYT), 689–716 (NQCL…VLSQ), 746–773 (SKML…LCHP), 802–825 (NKTL…VLCG), 827–844 (LSLP…YCLI), 859–882 (NQNL…LLCD), and 916–940 (CKTL…LFEA).

This sequence belongs to the NLRP family.

Its function is as follows. May be involved in inflammation and recognition of cytosolic pathogen-associated molecular patterns (PAMPs) not intercepted by membrane-bound receptors. This is NACHT, LRR and PYD domains-containing protein 4C (Nlrp4c) from Mus musculus (Mouse).